We begin with the raw amino-acid sequence, 180 residues long: NAD(P)H-quinone oxidoreductase subunit I, chloroplastic (180 aa).

2 consecutive 4Fe-4S ferredoxin-type domains span residues 55–84 and 95–124; these read GRIH…VDWR and LNYS…MTEE. 8 residues coordinate [4Fe-4S] cluster: Cys-64, Cys-67, Cys-70, Cys-74, Cys-104, Cys-107, Cys-110, and Cys-114.

The protein belongs to the complex I 23 kDa subunit family. NDH is composed of at least 16 different subunits, 5 of which are encoded in the nucleus. Requires [4Fe-4S] cluster as cofactor.

It localises to the plastid. The protein resides in the chloroplast thylakoid membrane. It carries out the reaction a plastoquinone + NADH + (n+1) H(+)(in) = a plastoquinol + NAD(+) + n H(+)(out). It catalyses the reaction a plastoquinone + NADPH + (n+1) H(+)(in) = a plastoquinol + NADP(+) + n H(+)(out). Functionally, NDH shuttles electrons from NAD(P)H:plastoquinone, via FMN and iron-sulfur (Fe-S) centers, to quinones in the photosynthetic chain and possibly in a chloroplast respiratory chain. The immediate electron acceptor for the enzyme in this species is believed to be plastoquinone. Couples the redox reaction to proton translocation, and thus conserves the redox energy in a proton gradient. This Illicium oligandrum (Star anise) protein is NAD(P)H-quinone oxidoreductase subunit I, chloroplastic.